The sequence spans 170 residues: MDLKKYIRDVKNFPKPGILFKDISPLLADGEALNYTITSMAEVAKDVDVIVGPDARGFLFGTPTAAVLKKPFIMVRKPGKLPGKVISREYDLEYGNNILQIQADFIKKGQTVAIVDDVLATGGTIKAIIKLLKEQGAIIKKVIILLELTDLNGRDSINEDGIEIVSLVKF.

This sequence belongs to the purine/pyrimidine phosphoribosyltransferase family. As to quaternary structure, homodimer.

It is found in the cytoplasm. The enzyme catalyses AMP + diphosphate = 5-phospho-alpha-D-ribose 1-diphosphate + adenine. It functions in the pathway purine metabolism; AMP biosynthesis via salvage pathway; AMP from adenine: step 1/1. Functionally, catalyzes a salvage reaction resulting in the formation of AMP, that is energically less costly than de novo synthesis. In Mycoplasmopsis agalactiae (strain NCTC 10123 / CIP 59.7 / PG2) (Mycoplasma agalactiae), this protein is Adenine phosphoribosyltransferase.